The chain runs to 353 residues: Photosystem II protein D1 (353 aa).

Threonine 2 is modified (N-acetylthreonine). Residue threonine 2 is modified to Phosphothreonine. 3 helical membrane-spanning segments follow: residues 29–46 (YIGWFGVLMIPTLLTATS), 118–133 (HFLLGVACYMGREWEL), and 142–156 (WIAVAYSAPVAAATA). Histidine 118 contacts chlorophyll a. Residue tyrosine 126 coordinates pheophytin a. Residues aspartate 170 and glutamate 189 each contribute to the [CaMn4O5] cluster site. The chain crosses the membrane as a helical span at residues 197 to 218 (FHMLGVAGVFGGSLFSAMHGSL). Histidine 198 lines the chlorophyll a pocket. Residues histidine 215 and 264–265 (SF) each bind a quinone. A Fe cation-binding site is contributed by histidine 215. Histidine 272 lines the Fe cation pocket. The helical transmembrane segment at 274–288 (FLAAWPVVGIWFTAL) threads the bilayer. The [CaMn4O5] cluster site is built by histidine 332, glutamate 333, aspartate 342, and alanine 344. The propeptide occupies 345-353 (AVEANSIDG).

The protein belongs to the reaction center PufL/M/PsbA/D family. PSII is composed of 1 copy each of membrane proteins PsbA, PsbB, PsbC, PsbD, PsbE, PsbF, PsbH, PsbI, PsbJ, PsbK, PsbL, PsbM, PsbT, PsbX, PsbY, PsbZ, Psb30/Ycf12, at least 3 peripheral proteins of the oxygen-evolving complex and a large number of cofactors. It forms dimeric complexes. The D1/D2 heterodimer binds P680, chlorophylls that are the primary electron donor of PSII, and subsequent electron acceptors. It shares a non-heme iron and each subunit binds pheophytin, quinone, additional chlorophylls, carotenoids and lipids. D1 provides most of the ligands for the Mn4-Ca-O5 cluster of the oxygen-evolving complex (OEC). There is also a Cl(-1) ion associated with D1 and D2, which is required for oxygen evolution. The PSII complex binds additional chlorophylls, carotenoids and specific lipids. is required as a cofactor. Post-translationally, tyr-161 forms a radical intermediate that is referred to as redox-active TyrZ, YZ or Y-Z. In terms of processing, C-terminally processed by CTPA; processing is essential to allow assembly of the oxygen-evolving complex and thus photosynthetic growth.

The protein resides in the plastid. It localises to the chloroplast thylakoid membrane. It carries out the reaction 2 a plastoquinone + 4 hnu + 2 H2O = 2 a plastoquinol + O2. Its function is as follows. Photosystem II (PSII) is a light-driven water:plastoquinone oxidoreductase that uses light energy to abstract electrons from H(2)O, generating O(2) and a proton gradient subsequently used for ATP formation. It consists of a core antenna complex that captures photons, and an electron transfer chain that converts photonic excitation into a charge separation. The D1/D2 (PsbA/PsbD) reaction center heterodimer binds P680, the primary electron donor of PSII as well as several subsequent electron acceptors. The sequence is that of Photosystem II protein D1 from Cryptomeria japonica (Japanese cedar).